The following is a 170-amino-acid chain: MSGESGFKNKSISEIVKEIYENIDGMTMSGKKDGNSNIGGFIATRHKEWYDKASIVNIIYEGYVTYGGMTGRDMGAMAQGLNESMDFEYLKSRCKQVEYLANKLDKYGVPFQRPFGEHALFIDAKKILGHIPIDDLIAQTLAIEIYLEGGVGSVEIGTLLADRDPITQEN.

K32 carries the N6-(pyridoxal phosphate)lysine modification.

Belongs to the beta-eliminating lyase family. It depends on pyridoxal 5'-phosphate as a cofactor.

The chain is Putative beta-eliminating lyase-like protein from Dictyostelium discoideum (Social amoeba).